The chain runs to 151 residues: Large ribosomal subunit protein bL9 (151 aa).

The protein belongs to the bacterial ribosomal protein bL9 family.

Binds to the 23S rRNA. This chain is Large ribosomal subunit protein bL9, found in Prochlorococcus marinus (strain MIT 9515).